A 369-amino-acid polypeptide reads, in one-letter code: 3-isopropylmalate dehydrogenase (369 aa).

77 to 90 contacts NAD(+); it reads GPKWDDLPFDKKPE. The substrate site is built by Arg-97, Arg-107, Arg-135, and Asp-226. Residues Asp-226, Asp-250, and Asp-254 each contribute to the Mg(2+) site. 289–301 contributes to the NAD(+) binding site; that stretch reads GSAPDIAGKDMAN.

The protein belongs to the isocitrate and isopropylmalate dehydrogenases family. LeuB type 1 subfamily. As to quaternary structure, homodimer. Mg(2+) serves as cofactor. Requires Mn(2+) as cofactor.

It localises to the cytoplasm. It carries out the reaction (2R,3S)-3-isopropylmalate + NAD(+) = 4-methyl-2-oxopentanoate + CO2 + NADH. It participates in amino-acid biosynthesis; L-leucine biosynthesis; L-leucine from 3-methyl-2-oxobutanoate: step 3/4. Functionally, catalyzes the oxidation of 3-carboxy-2-hydroxy-4-methylpentanoate (3-isopropylmalate) to 3-carboxy-4-methyl-2-oxopentanoate. The product decarboxylates to 4-methyl-2 oxopentanoate. The sequence is that of 3-isopropylmalate dehydrogenase from Paramagnetospirillum magneticum (strain ATCC 700264 / AMB-1) (Magnetospirillum magneticum).